A 244-amino-acid chain; its full sequence is Phosphate propanoyltransferase (244 aa).

52-54 (ISA) contributes to the CoA binding site. 2 residues coordinate Zn(2+): H56 and H58. R106 contacts CoA. R112 lines the phosphate pocket. 4 residues coordinate Zn(2+): E118, H166, H168, and H214. N221 provides a ligand contact to CoA.

The protein belongs to the PduL family. Full-length protein forms large oligomers. Possible homotrimer and monomer, when purified in the absence of the encapsulation peptide (EP, residues 1-20). The EP may influence oligomerization. Zn(2+) serves as cofactor.

It is found in the bacterial microcompartment. The enzyme catalyses propanoyl-CoA + phosphate = propanoyl phosphate + CoA. Its function is as follows. Part of a bacterial microcompartment (BMC) locus required for growth on plant and algal sugars, including L-fucose and L-rhamnose. Thought to be active on lactyl-CoA in a lactaldehyde-degradation pathway. CoA is regenerated within the BMC via this enzyme, although there must also be cofactor transport across the BMC. Directly targeted to the BMC. This is Phosphate propanoyltransferase from Planctopirus limnophila (strain ATCC 43296 / DSM 3776 / IFAM 1008 / Mu 290) (Planctomyces limnophilus).